Here is a 414-residue protein sequence, read N- to C-terminus: Multifunctional CCA protein (414 aa).

Residues glycine 8 and arginine 11 each coordinate ATP. The CTP site is built by glycine 8 and arginine 11. Residues aspartate 21 and aspartate 23 each coordinate Mg(2+). Arginine 91, arginine 137, and arginine 140 together coordinate ATP. Residues arginine 91, arginine 137, and arginine 140 each contribute to the CTP site. An HD domain is found at 228 to 329 (TGIHTLMTLA…LKLFDAVDVW (102 aa)).

This sequence belongs to the tRNA nucleotidyltransferase/poly(A) polymerase family. Bacterial CCA-adding enzyme type 1 subfamily. Monomer. Can also form homodimers and oligomers. It depends on Mg(2+) as a cofactor. Ni(2+) is required as a cofactor.

It carries out the reaction a tRNA precursor + 2 CTP + ATP = a tRNA with a 3' CCA end + 3 diphosphate. The catalysed reaction is a tRNA with a 3' CCA end + 2 CTP + ATP = a tRNA with a 3' CCACCA end + 3 diphosphate. Functionally, catalyzes the addition and repair of the essential 3'-terminal CCA sequence in tRNAs without using a nucleic acid template. Adds these three nucleotides in the order of C, C, and A to the tRNA nucleotide-73, using CTP and ATP as substrates and producing inorganic pyrophosphate. tRNA 3'-terminal CCA addition is required both for tRNA processing and repair. Also involved in tRNA surveillance by mediating tandem CCA addition to generate a CCACCA at the 3' terminus of unstable tRNAs. While stable tRNAs receive only 3'-terminal CCA, unstable tRNAs are marked with CCACCA and rapidly degraded. The sequence is that of Multifunctional CCA protein from Serratia proteamaculans (strain 568).